Here is a 277-residue protein sequence, read N- to C-terminus: Phosphatidylglycerol--prolipoprotein diacylglyceryl transferase (277 aa).

3 helical membrane-spanning segments follow: residues 16–36, 62–82, and 101–121; these read FFQI…FYFL, LLFF…VLFY, and GMAF…FAHL. Arginine 145 contacts a 1,2-diacyl-sn-glycero-3-phospho-(1'-sn-glycerol). 2 helical membrane-spanning segments follow: residues 214-234 and 243-263; these read PIWG…RFIA and FLGL…PMIV.

This sequence belongs to the Lgt family.

It localises to the cell inner membrane. The catalysed reaction is L-cysteinyl-[prolipoprotein] + a 1,2-diacyl-sn-glycero-3-phospho-(1'-sn-glycerol) = an S-1,2-diacyl-sn-glyceryl-L-cysteinyl-[prolipoprotein] + sn-glycerol 1-phosphate + H(+). It functions in the pathway protein modification; lipoprotein biosynthesis (diacylglyceryl transfer). Functionally, catalyzes the transfer of the diacylglyceryl group from phosphatidylglycerol to the sulfhydryl group of the N-terminal cysteine of a prolipoprotein, the first step in the formation of mature lipoproteins. This is Phosphatidylglycerol--prolipoprotein diacylglyceryl transferase from Leptothrix cholodnii (strain ATCC 51168 / LMG 8142 / SP-6) (Leptothrix discophora (strain SP-6)).